The primary structure comprises 243 residues: Purine nucleoside phosphorylase YfiH (243 aa).

Histidine 71, cysteine 107, and histidine 124 together coordinate Zn(2+).

The protein belongs to the purine nucleoside phosphorylase YfiH/LACC1 family. In terms of assembly, homodimer. The cofactor is Cu(2+). Zn(2+) serves as cofactor.

It catalyses the reaction adenosine + phosphate = alpha-D-ribose 1-phosphate + adenine. It carries out the reaction S-methyl-5'-thioadenosine + phosphate = 5-(methylsulfanyl)-alpha-D-ribose 1-phosphate + adenine. The catalysed reaction is inosine + phosphate = alpha-D-ribose 1-phosphate + hypoxanthine. The enzyme catalyses adenosine + H2O + H(+) = inosine + NH4(+). Functionally, purine nucleoside enzyme that catalyzes the phosphorolysis of adenosine and inosine nucleosides, yielding D-ribose 1-phosphate and the respective free bases, adenine and hypoxanthine. Also catalyzes the phosphorolysis of S-methyl-5'-thioadenosine into adenine and S-methyl-5-thio-alpha-D-ribose 1-phosphate. Also has adenosine deaminase activity. May also act as a polyphenol oxidase: able to oxidize syringaldazine and 2,2'-azino-bis(3-ethylbenzthiazoline-6-sulfonic acid) (ABTS) in vitro. This is Purine nucleoside phosphorylase YfiH from Escherichia coli (strain K12).